Consider the following 93-residue polypeptide: Exodeoxyribonuclease 7 small subunit (93 aa).

The span at 1–17 (MAKSSASSLSSAKPVAA) shows a compositional bias: low complexity. Positions 1 to 22 (MAKSSASSLSSAKPVAAGPDAS) are disordered.

It belongs to the XseB family. In terms of assembly, heterooligomer composed of large and small subunits.

The protein resides in the cytoplasm. It carries out the reaction Exonucleolytic cleavage in either 5'- to 3'- or 3'- to 5'-direction to yield nucleoside 5'-phosphates.. Its function is as follows. Bidirectionally degrades single-stranded DNA into large acid-insoluble oligonucleotides, which are then degraded further into small acid-soluble oligonucleotides. This is Exodeoxyribonuclease 7 small subunit from Polaromonas naphthalenivorans (strain CJ2).